A 186-amino-acid polypeptide reads, in one-letter code: ATP synthase subunit b (186 aa).

A helical membrane pass occupies residues 5–25; that stretch reads LILNLLVLLAPAAVFAAGGGH.

Belongs to the ATPase B chain family. In terms of assembly, F-type ATPases have 2 components, F(1) - the catalytic core - and F(0) - the membrane proton channel. F(1) has five subunits: alpha(3), beta(3), gamma(1), delta(1), epsilon(1). F(0) has three main subunits: a(1), b(2) and c(10-14). The alpha and beta chains form an alternating ring which encloses part of the gamma chain. F(1) is attached to F(0) by a central stalk formed by the gamma and epsilon chains, while a peripheral stalk is formed by the delta and b chains.

It localises to the cell inner membrane. Its function is as follows. F(1)F(0) ATP synthase produces ATP from ADP in the presence of a proton or sodium gradient. F-type ATPases consist of two structural domains, F(1) containing the extramembraneous catalytic core and F(0) containing the membrane proton channel, linked together by a central stalk and a peripheral stalk. During catalysis, ATP synthesis in the catalytic domain of F(1) is coupled via a rotary mechanism of the central stalk subunits to proton translocation. Component of the F(0) channel, it forms part of the peripheral stalk, linking F(1) to F(0). The protein is ATP synthase subunit b of Bdellovibrio bacteriovorus (strain ATCC 15356 / DSM 50701 / NCIMB 9529 / HD100).